We begin with the raw amino-acid sequence, 62 residues long: Large ribosomal subunit protein bL32 (62 aa).

Positions 1–16 are enriched in basic residues; that stretch reads MAVQKNRKTRSKRGMR. The disordered stretch occupies residues 1 to 62; that stretch reads MAVQKNRKTR…VISQGDSDDE (62 aa). Positions 53-62 are enriched in polar residues; that stretch reads VISQGDSDDE.

It belongs to the bacterial ribosomal protein bL32 family.

In Alcanivorax borkumensis (strain ATCC 700651 / DSM 11573 / NCIMB 13689 / SK2), this protein is Large ribosomal subunit protein bL32.